The chain runs to 394 residues: Elongation factor Tu (394 aa).

In terms of domain architecture, tr-type G spans 10–204; the sequence is KPHVNVGTIG…HLDTYIPEPE (195 aa). Residues 19–26 are G1; that stretch reads GHVDHGKT. Residue 19–26 participates in GTP binding; it reads GHVDHGKT. Thr-26 contacts Mg(2+). Positions 60-64 are G2; that stretch reads GITIN. Residues 81-84 form a G3 region; the sequence is DCPG. GTP contacts are provided by residues 81–85 and 136–139; these read DCPGH and NKCD. The tract at residues 136–139 is G4; sequence NKCD. Residues 174 to 176 form a G5 region; the sequence is SAL.

The protein belongs to the TRAFAC class translation factor GTPase superfamily. Classic translation factor GTPase family. EF-Tu/EF-1A subfamily. In terms of assembly, monomer.

The protein localises to the cytoplasm. It catalyses the reaction GTP + H2O = GDP + phosphate + H(+). GTP hydrolase that promotes the GTP-dependent binding of aminoacyl-tRNA to the A-site of ribosomes during protein biosynthesis. This chain is Elongation factor Tu, found in Klebsiella pneumoniae subsp. pneumoniae (strain ATCC 700721 / MGH 78578).